Consider the following 1010-residue polypeptide: MVIKKLFILIFCLFLIINEINGKKTKINDIKKSKPKLSSTLLNVHIVAHTHDDVGWLKTVDEYYYGSNMSIAFAGVQYTLDTAITCLLANPERKFIYVEIAFFQRWWDEQSTTMQNIVKGLVESGQLEFINGGYCMNDEATTYYDDTIDQMTLGHQFLWENFGVMPKIGWHIDPFGHSATQARIFGQLGFDAFIIGRMDYQDIEARLENKQMEFMWRSTQSTPENQVFTSVLRAMYCTPDGFNFEQGDDPIQDDPNLFDNNVDSRAEQFTQVALEYATHYRTNNVLIPFGCDFAYLNAQMYYKNIDKLIAHINSNPDKYGLNLLYSTPSIYIDAVNDANLVWEVKTDDLFPYADNEFSYWTGYFVSRPALKGYVRQNNALLHVVEQMLVTSSNLMPSSRSEQLVDDIVIMREVMGIAQHHDAVSGTEQQHVADDYAERLSIGNCASLETINTVVGTLLTANGNSKSAAATPTISFCPLLNQSICPATDPLSSGTSVPVLIYNSLSWTRNEPVRIPIPIANVTVTSSSNGSITSQVNQINGTFILEFLATIPPLGYSTYIITSTASDFVEPNSIPAIIIQDEIIVSGGGKINEKVSYNDPIILENDYINVQFSSQDGSILSITNKTSGVTSSITQEYIWYNPSVGNDDSAQCSGAYIFRPVEDFAYPYNNATPSVSIIRGEISSSIRRFWSNEMVQTFRLYSNADHLEVEEIIGPIDISDGIGKEIVSRYTTTLVTDQTWYSDSQGMEMQKRITNYRPSWNLTVVQPTSGNYVPVNAIAYIQDPNQSLQFTIVTDRSRGCASLRDGQLDMMMHRRTLKDDGRGVGQPMNESTQIVTTSKLIFHDISSYAQSHYRPAALSLSHPLLPMFTTTQQSSNDWNSQYQGVYSPLTSASPLPNGLKIQTLQWLDNQDNTILLRIENIYQIDGQDSQDPQTITLDLSTIFSTITITSATEMNLTGVQKLSNLSRLKWKTVDGKNYDHKSSSSTKEDSSNGFVFTFSPMQIRTFIITTN.

The first 22 residues, 1-22 (MVIKKLFILIFCLFLIINEING), serve as a signal peptide directing secretion. A propeptide spans 23–40 (KKTKINDIKKSKPKLSST) (pro I). Zn(2+) contacts are provided by His-51 and Asp-53. Asn-68 carries an N-linked (GlcNAc...) asparagine glycan. Residues Asp-173 and His-420 each contribute to the Zn(2+) site. The Nucleophile role is filled by Asp-173. Asn-480, Asn-520, Asn-528, Asn-539, Asn-623, Asn-760, Asn-784, Asn-828, Asn-954, and Asn-963 each carry an N-linked (GlcNAc...) asparagine glycan. Positions 508–595 (RNEPVRIPIP…GGGKINEKVS (88 aa)) are cleaved as a propeptide — pro II.

Belongs to the glycosyl hydrolase 38 family. Tetramer of equimolar amounts of 60 and 58 kDa subunits. Requires Zn(2+) as cofactor. In terms of processing, first cleaved into the mature 58 kDa subunit and an intermediate 82 kDa subunit. The latter is then cleaved to its mature 60 kDa subunit form. These events occur in multiple intracellular compartments. The 60 kDa subunit may form one or more intramolecular disulfide bonds.

It localises to the lysosome. The catalysed reaction is Hydrolysis of terminal, non-reducing alpha-D-mannose residues in alpha-D-mannosides.. The sequence is that of Lysosomal alpha-mannosidase (manA) from Dictyostelium discoideum (Social amoeba).